The sequence spans 2615 residues: Polycystin-1-like protein 1 (2615 aa).

The Extracellular segment spans residues 1-1524 (MDVDEDQHAV…VSSISEFQSH (1524 aa)). The segment at 17–93 (IQANPELCVS…GTNSFSNPPP (77 aa)) is disordered. Residues N224, N297, N306, N390, N440, N534, and N619 are each glycosylated (N-linked (GlcNAc...) asparagine). PKD domains follow at residues 291-373 (SVSV…VQKR) and 375-456 (MANR…VREP). Positions 457–1349 (CQPPPVKNMG…GEEDYLHKRN (893 aa)) constitute an REJ domain. The interval 749-815 (SSKSDLPSNL…GEPMEEYSSL (67 aa)) is disordered. Over residues 778–789 (ALSNLGSISAES) the composition is skewed to polar residues. The region spanning 1364 to 1512 (RFTGLSENSQ…SVLRRKLNAT (149 aa)) is the GAIN-B domain. N1458 is a glycosylation site (N-linked (GlcNAc...) asparagine). C1468 and C1494 are oxidised to a cystine. The tract at residues 1468 to 1512 (CVFWDKTEWRSEGPYPQPGSSPEKVNCSYHHLAPVSVLRRKLNAT) is GPS. N-linked (GlcNAc...) asparagine glycosylation occurs at N1510. Residues 1525-1545 (PHNLLPGIFSAFLLVLYGILV) traverse the membrane as a helical segment. Residues 1546–1732 (SKSRYVDCHE…PPSRSYLHTQ (187 aa)) are Cytoplasmic-facing. One can recognise a PLAT domain in the interval 1573–1690 (QLYAVVIDTG…LGGHVLREFF (118 aa)). A helical transmembrane segment spans residues 1733–1753 (RLAVSFCLLCVYSCLTALVTV). The Extracellular segment spans residues 1754–1772 (RDHQQRPLDVGPTAITLEP). Residues 1773-1793 (FCMALLCTLLACPVAQLLSLL) traverse the membrane as a helical segment. Residues 1794–1905 (FRCSKEARGD…ELGSQKSRVC (112 aa)) are Cytoplasmic-facing. Residues 1807–1840 (STQWPLRGVKTETPQGHDSSGRPDSRQPSPHPTS) form a disordered region. Residues 1906–1926 (LLWSSSVAWAISGSASLACGL) form a helical membrane-spanning segment. Over 1927–1950 (GTGFLGYWFVPAQCMWWLYLLLLS) the chain is Extracellular. A helical transmembrane segment spans residues 1951-1971 (LVCCAFITQPLMICLAALVFA). Topologically, residues 1972–2057 (WKRKHDSKFF…ERLRRESIMQ (86 aa)) are cytoplasmic. A helical transmembrane segment spans residues 2058–2078 (AALRDMTTHSIMLLLLLFIAY). Over 2079–2288 (GRFCPGEISL…IFYSDSALKY (210 aa)) the chain is Extracellular. A helical membrane pass occupies residues 2289 to 2309 (LLMLSELLFLVLNVIHLCFQL). Residues 2310–2332 (WGMTTKGILSYWRKPRHWLELSM) are Cytoplasmic-facing. A helical transmembrane segment spans residues 2333–2353 (VGVAIAYYAASGHLTTLAVNI). Over 2354–2379 (TDQFHKGLYQRLVDIGLMVSWHQRAR) the chain is Extracellular. The chain crosses the membrane as a helical span at residues 2380 to 2400 (CLQGILLFLWMLKYVHLLSSL). The Cytoplasmic portion of the chain corresponds to 2401–2405 (STMTP). A helical membrane pass occupies residues 2406-2426 (FSAVTCFPLFRVLLVGALLLA). At 2427–2483 (AHYHSRWFLLFTGTLSHGTSAEAFPGLLLQFPGRSKKDSWHNCLKSDHGVMRCYYGT) the chain is on the extracellular side. Residues 2484–2504 (LFLLLATLGFRMLRATFLTVF) form a helical membrane-spanning segment. Residues 2505 to 2615 (QNRKSSHRKP…VSGPLAAESE (111 aa)) lie on the Cytoplasmic side of the membrane. Positions 2589-2615 (RAGDSPPVGSSEYQATGVSGPLAAESE) are disordered.

This sequence belongs to the polycystin family. As to quaternary structure, heterodimer. Interacts with PKD2 to form a calcium channel. Interacts with PKD2L1; to form ciliary calcium channel. May interact with GNA12, GNAS, GNAI1 and GNAI2. As to expression, in testis, strong expression in Leydig cells, low level in seminal ducts, myoid cells and tunica vaginalis. Other tissues, including adrenal gland and heart myocardium, also show low expression. In embryo, highly expressed in the node.

The protein localises to the cell projection. The protein resides in the cilium membrane. Its function is as follows. Component of a calcium-permeant ion channel formed by PKD1L2 and PKD1L1 in primary cilia, where it controls cilium calcium concentration, without affecting cytoplasmic calcium concentration, and regulates sonic hedgehog/SHH signaling and GLI2 transcription. The PKD1L1:PKD2L1 channel complex is mechanosensitive only at high pressures and is highly temperature sensitive. Also involved in left/right axis specification downstream of nodal flow by forming a complex with PKD2 in cilia to facilitate flow detection in left/right patterning. May function as a G-protein-coupled receptor. This Mus musculus (Mouse) protein is Polycystin-1-like protein 1.